A 509-amino-acid polypeptide reads, in one-letter code: Steroid 17-alpha-hydroxylase/17,20 lyase (509 aa).

Heme is bound at residue C440.

It belongs to the cytochrome P450 family. The cofactor is heme.

Its subcellular location is the endoplasmic reticulum membrane. The protein localises to the microsome membrane. It carries out the reaction a C21-steroid + reduced [NADPH--hemoprotein reductase] + O2 = a 17alpha-hydroxy-C21-steroid + oxidized [NADPH--hemoprotein reductase] + H2O + H(+). It catalyses the reaction progesterone + reduced [NADPH--hemoprotein reductase] + O2 = 17alpha-hydroxyprogesterone + oxidized [NADPH--hemoprotein reductase] + H2O + H(+). The enzyme catalyses pregnenolone + reduced [NADPH--hemoprotein reductase] + O2 = 17alpha-hydroxypregnenolone + oxidized [NADPH--hemoprotein reductase] + H2O + H(+). The catalysed reaction is 17alpha-hydroxyprogesterone + reduced [NADPH--hemoprotein reductase] + O2 = androst-4-ene-3,17-dione + acetate + oxidized [NADPH--hemoprotein reductase] + H2O + 2 H(+). It carries out the reaction 17alpha-hydroxyprogesterone + reduced [NADPH--hemoprotein reductase] + O2 = 16alpha,17alpha-dihydroxyprogesterone + oxidized [NADPH--hemoprotein reductase] + H2O + H(+). It catalyses the reaction 16alpha,17alpha-dihydroxyprogesterone + reduced [NADPH--hemoprotein reductase] + O2 = 6beta,16alpha,17alpha-trihydroxyprogesterone + oxidized [NADPH--hemoprotein reductase] + H2O + H(+). The enzyme catalyses 17alpha-hydroxypregnenolone + reduced [NADPH--hemoprotein reductase] + O2 = 3beta-hydroxyandrost-5-en-17-one + acetate + oxidized [NADPH--hemoprotein reductase] + H2O + 2 H(+). The catalysed reaction is 16alpha,17alpha-dihydroxypregnenolone + reduced [NADPH--hemoprotein reductase] + O2 = 3beta,16alpha-dihydroxy-androst-5-en-17-one + acetate + oxidized [NADPH--hemoprotein reductase] + H2O + 2 H(+). It carries out the reaction 3beta-hydroxyandrost-5-en-17-one + reduced [NADPH--hemoprotein reductase] + O2 = 3beta,16alpha-dihydroxy-androst-5-en-17-one + oxidized [NADPH--hemoprotein reductase] + H2O + H(+). It catalyses the reaction androst-4-ene-3,17-dione + reduced [NADPH--hemoprotein reductase] + O2 = 16alpha-hydroxyandrost-4-ene-3,17-dione + oxidized [NADPH--hemoprotein reductase] + H2O + H(+). The protein operates within steroid hormone biosynthesis. Its pathway is steroid biosynthesis; glucocorticoid biosynthesis. Its activity is regulated as follows. Regulated predominantly by intracellular cAMP levels. The 17,20-lyase activity is stimulated by cytochrome b5, which acts as an allosteric effector increasing the Vmax of the lyase activity. Its function is as follows. A cytochrome P450 monooxygenase involved in corticoid and androgen biosynthesis. Catalyzes 17-alpha hydroxylation of C21 steroids, which is common for both pathways. A second oxidative step, required only for androgen synthesis, involves an acyl-carbon cleavage. The 17-alpha hydroxy intermediates, as part of adrenal glucocorticoids biosynthesis pathway, are precursors of cortisol. Hydroxylates steroid hormones, pregnenolone and progesterone to form 17-alpha hydroxy metabolites, followed by the cleavage of the C17-C20 bond to form C19 steroids, dehydroepiandrosterone (DHEA) and androstenedione. Has 16-alpha hydroxylase activity. Catalyzes 16-alpha hydroxylation of 17-alpha hydroxy pregnenolone, followed by the cleavage of the C17-C20 bond to form 16-alpha-hydroxy DHEA. Also 16-alpha hydroxylates androgens, relevant for estriol synthesis. Mechanistically, uses molecular oxygen inserting one oxygen atom into a substrate, and reducing the second into a water molecule, with two electrons provided by NADPH via cytochrome P450 reductase (CPR; NADPH-ferrihemoprotein reductase). This is Steroid 17-alpha-hydroxylase/17,20 lyase (Cyp17a1) from Peromyscus leucopus (White-footed mouse).